Reading from the N-terminus, the 228-residue chain is MSYAEKPDEITKDEWMEKLNNLHVQRADMNRLIMNYLVTEGFKEAAEKFRMESGIEPSVDLETLDERIKIREMILKGQIQEAIALINSLHPELLDTNRYLYFHLQQQHLIELIRQRETEAALEFAQTQLAEQGEESRECLTEMERTLALLAFDSPEESPFGDLLHMMQRQKVWSEVNQAVLDYENRESTPKLAKLLKLLLWAQNELDQKKVKYPKMTDLSKGVIEEPK.

Residues 25-57 (QRADMNRLIMNYLVTEGFKEAAEKFRMESGIEP) form the LisH domain. One can recognise a CTLH domain in the interval 63–120 (TLDERIKIREMILKGQIQEAIALINSLHPELLDTNRYLYFHLQQQHLIELIRQRETEA). The segment at 116 to 212 (RETEAALEFA…QNELDQKKVK (97 aa)) is interaction with CTNNB1.

It belongs to the GID8 family. As to quaternary structure, homodimer; may also form higher oligomers. Identified in the CTLH complex that contains GID4, RANBP9 and/or RANBP10, MKLN1, MAEA, RMND5A (or alternatively its paralog RMND5B), GID8, ARMC8, WDR26 and YPEL5. Within this complex, MAEA, RMND5A (or alternatively its paralog RMND5B), GID8, WDR26, and RANBP9 and/or RANBP10 form the catalytic core, while GID4, MKLN1, ARMC8 and YPEL5 have ancillary roles. Interacts with RANBP9. Part of a complex consisting of RANBP9, MKLN1 and GID8. Interacts with CTNNB1, AXIN1 and GSK3B. In terms of processing, polyubiquitinated through 'Lys-48'-polyubiquitin chains, leading to proteasomal degradation in the absence of Wnt stimulation. Ubiquitous.

The protein resides in the cytoplasm. Its subcellular location is the nucleus. Functionally, core component of the CTLH E3 ubiquitin-protein ligase complex that selectively accepts ubiquitin from UBE2H and mediates ubiquitination and subsequent proteasomal degradation of the transcription factor HBP1. Acts as a positive regulator of Wnt signaling pathway by promoting beta-catenin (CTNNB1) nuclear accumulation. This Mus musculus (Mouse) protein is Glucose-induced degradation protein 8 homolog (Gid8).